The chain runs to 288 residues: 2-hydroxy-6-oxononadienedioate/2-hydroxy-6-oxononatrienedioate hydrolase (288 aa).

H267 serves as the catalytic Proton acceptor.

The protein belongs to the AB hydrolase superfamily. MhpC family. Homodimer.

It carries out the reaction (2Z,4E)-2-hydroxy-6-oxonona-2,4-dienedioate + H2O = (2Z)-2-hydroxypenta-2,4-dienoate + succinate + H(+). It catalyses the reaction (2Z,4E,7E)-2-hydroxy-6-oxonona-2,4,7-trienedioate + H2O = (2Z)-2-hydroxypenta-2,4-dienoate + fumarate + H(+). It functions in the pathway aromatic compound metabolism; 3-phenylpropanoate degradation. Its function is as follows. Catalyzes the cleavage of the C5-C6 bond of 2-hydroxy-6-oxononadienedioate and 2-hydroxy-6-oxononatrienedioate, a dienol ring fission product of the bacterial meta-cleavage pathway for degradation of phenylpropionic acid. This is 2-hydroxy-6-oxononadienedioate/2-hydroxy-6-oxononatrienedioate hydrolase from Klebsiella pneumoniae subsp. pneumoniae (strain ATCC 700721 / MGH 78578).